Consider the following 443-residue polypeptide: MDSLTTLYKNHLDTLQERTRNVLARFNLDALLIHSGELFNVFLDDHPYPFKVNPQFKAWVPVTQVPNCWLLVDGVNKPKLWFYLPVDYWHNVEPLPSAFWTEEIDIIALPKADDIGGQLPAARGNIAYIGPVPERALKLDVPADKINPKGVIDYLHFYRAYKTDYELACMREAQKTAVNGHRAAHEAFLSGMSEFDINLAYLTATGHRDTDVPYSNIVALNEHAAVLHYTRLDHRAPSEMRSFLLDAGAEYNGYAADLTRTWAADGDSDFAALIKDVNEEQLALIGTMKAGVSYIDYHIQFHQRIAKLLRRHQIVTDISEEAMVEADITGPFMPHGIGHPLGLQVHDVAGFMQDDTGTHLAAPAKYPYLRCTRVLQPRMVLTIEPGIYFIESLLVPWREGPFSKHFNWQKIEALKPFGGIRIEDNVVIHEHGVENMTRDLKLA.

Positions 246, 257, 339, 384, and 423 each coordinate Mn(2+).

It belongs to the peptidase M24B family. Bacterial-type prolidase subfamily. The cofactor is Mn(2+).

It carries out the reaction Xaa-L-Pro dipeptide + H2O = an L-alpha-amino acid + L-proline. Functionally, splits dipeptides with a prolyl residue in the C-terminal position. The sequence is that of Xaa-Pro dipeptidase from Cronobacter sakazakii (strain ATCC BAA-894) (Enterobacter sakazakii).